Consider the following 172-residue polypeptide: Adenine phosphoribosyltransferase (172 aa).

Belongs to the purine/pyrimidine phosphoribosyltransferase family. Homodimer.

It localises to the cytoplasm. It carries out the reaction AMP + diphosphate = 5-phospho-alpha-D-ribose 1-diphosphate + adenine. The protein operates within purine metabolism; AMP biosynthesis via salvage pathway; AMP from adenine: step 1/1. Catalyzes a salvage reaction resulting in the formation of AMP, that is energically less costly than de novo synthesis. The polypeptide is Adenine phosphoribosyltransferase (Roseiflexus castenholzii (strain DSM 13941 / HLO8)).